We begin with the raw amino-acid sequence, 417 residues long: Transmembrane protease serine 11G (417 aa).

Residues 1–21 are Cytoplasmic-facing; that stretch reads MYQPGILVRRKRVWKPWTVAL. A helical; Signal-anchor for type II membrane protein transmembrane segment spans residues 22 to 42; sequence ITVALLLALAVLIGLLVYFLV. The Extracellular portion of the chain corresponds to 43 to 417; sequence YDEKTHYYQA…RDWIKSKTSI (375 aa). In terms of domain architecture, SEA spans 46–165; the sequence is KTHYYQASFW…PYLREMNAAQ (120 aa). N-linked (GlcNAc...) asparagine glycosylation is present at N60. In terms of domain architecture, Peptidase S1 spans 186-416; the sequence is IADGKPADKA…YRDWIKSKTS (231 aa). A disulfide bond links C211 and C227. Catalysis depends on charge relay system residues H226 and D271. Cystine bridges form between C336–C352 and C363–C392. S367 (charge relay system) is an active-site residue.

This sequence belongs to the peptidase S1 family.

The protein resides in the membrane. The chain is Transmembrane protease serine 11G (Tmprss11g) from Mus musculus (Mouse).